A 364-amino-acid chain; its full sequence is C3a anaphylatoxin chemotactic receptor (364 aa).

The Extracellular portion of the chain corresponds to M1–S50. N-linked (GlcNAc...) asparagine glycosylation is found at N13 and N34. A helical membrane pass occupies residues I51–I71. Residues A72–T82 are Cytoplasmic-facing. Residues I83–I103 traverse the membrane as a helical segment. The Extracellular segment spans residues A104–K120. C119 and C198 are disulfide-bonded. A helical transmembrane segment spans residues I121–S141. Residues L142–S159 are Cytoplasmic-facing. The helical transmembrane segment at I160–P180 threads the bilayer. Over S181–T220 the chain is Extracellular. The helical transmembrane segment at R221 to G241 threads the bilayer. Topologically, residues R242 to Q256 are cytoplasmic. The chain crosses the membrane as a helical span at residues I257–L277. Residues V278–P295 are Extracellular-facing. A helical transmembrane segment spans residues L296–G316. Residues Q317 to V364 are Cytoplasmic-facing.

This sequence belongs to the G-protein coupled receptor 1 family.

It is found in the cell membrane. Functionally, receptor for the chemotactic and inflammatory peptide anaphylatoxin C3a. This receptor stimulates chemotaxis, granule enzyme release and superoxide anion production. This Oncorhynchus mykiss (Rainbow trout) protein is C3a anaphylatoxin chemotactic receptor (c3ar1).